Consider the following 384-residue polypeptide: S-adenosylmethionine synthase (384 aa).

H15 provides a ligand contact to ATP. Mg(2+) is bound at residue D17. E43 is a K(+) binding site. Residues E56 and Q99 each coordinate L-methionine. Residues 99 to 109 (QSADINQGVDR) are flexible loop. ATP-binding positions include 164–166 (DAK), 230–231 (RF), D239, 245–246 (RK), A262, and K266. An L-methionine-binding site is contributed by D239. Residue K270 participates in L-methionine binding.

Belongs to the AdoMet synthase family. Homotetramer; dimer of dimers. The cofactor is Mg(2+). K(+) is required as a cofactor.

It is found in the cytoplasm. It catalyses the reaction L-methionine + ATP + H2O = S-adenosyl-L-methionine + phosphate + diphosphate. It participates in amino-acid biosynthesis; S-adenosyl-L-methionine biosynthesis; S-adenosyl-L-methionine from L-methionine: step 1/1. Functionally, catalyzes the formation of S-adenosylmethionine (AdoMet) from methionine and ATP. The overall synthetic reaction is composed of two sequential steps, AdoMet formation and the subsequent tripolyphosphate hydrolysis which occurs prior to release of AdoMet from the enzyme. This chain is S-adenosylmethionine synthase, found in Haemophilus influenzae (strain 86-028NP).